A 249-amino-acid polypeptide reads, in one-letter code: MPALAIIGDTLLNASLIDKYTPPSSNAQNQGFTTYVHSVKPLIPQIIGIPEDALKQWTLFTDWAKLNDIDLNADETFKEILTIGKRLVSGDITQFVYRQFRGKLEVGYFGKTDNVREKPSFFPLLGAGQIESLKDLLSRHFEVWVYFAPKPVIDWMIRHEIDLATVEFDVRNMLKMLSNNPIKWETLLEKIANVAESRITADRDEVGEWRPWVIGLLMIFGQSLKIGGLMAVLKWRQLGPVCYRNLSRV.

This is an uncharacterized protein from Colorado tick fever virus (strain USA/Florio N-7180) (CTFV).